A 289-amino-acid polypeptide reads, in one-letter code: 4-diphosphocytidyl-2-C-methyl-D-erythritol kinase (289 aa).

Lysine 11 is a catalytic residue. Position 95–105 (95–105 (PMGGGIGGGSS)) interacts with ATP. The active site involves aspartate 137.

Belongs to the GHMP kinase family. IspE subfamily.

It carries out the reaction 4-CDP-2-C-methyl-D-erythritol + ATP = 4-CDP-2-C-methyl-D-erythritol 2-phosphate + ADP + H(+). Its pathway is isoprenoid biosynthesis; isopentenyl diphosphate biosynthesis via DXP pathway; isopentenyl diphosphate from 1-deoxy-D-xylulose 5-phosphate: step 3/6. Catalyzes the phosphorylation of the position 2 hydroxy group of 4-diphosphocytidyl-2C-methyl-D-erythritol. This is 4-diphosphocytidyl-2-C-methyl-D-erythritol kinase from Aeromonas hydrophila subsp. hydrophila (strain ATCC 7966 / DSM 30187 / BCRC 13018 / CCUG 14551 / JCM 1027 / KCTC 2358 / NCIMB 9240 / NCTC 8049).